The following is a 253-amino-acid chain: MAHYKVEQDDWLTVYLKYLLFIFNFFFWVGGAAVMAVGVWTLVEKSGYLGVLASSTFAASAYILIFAGALVMVTGFLGFGAVIREDRGCLSAYFCLLLAIFLVELVAGVLAHVYYQRLSDELKQHLTRTLAENYRQPGAAEITASVDRLQQDFKCCGSNSSADWLQSSYILSPEAEGRRVPDSCCKTVVARCGQRAHPSNIYKVEGGCISKLEQFLADHLLLMGAVGIGVACLQICGMILTCGLHRRLQLHFY.

4 helical membrane passes run 19–39, 63–83, 90–110, and 220–240; these read LLFIFNFFFWVGGAAVMAVGV, ILIFAGALVMVTGFLGFGAVI, LSAYFCLLLAIFLVELVAGVL, and LLLMGAVGIGVACLQICGMIL.

Belongs to the tetraspanin (TM4SF) family.

The protein resides in the membrane. This Bos taurus (Bovine) protein is Tetraspanin-11 (TSPAN11).